The primary structure comprises 475 residues: Equilibrative nucleoside transporter 3 (475 aa).

Residues 1-51 (MAFASEDIAYHSSNAVYRVPSNRHEADQEALLGKPLDYPAPGLQRPEDRFN) are Cytoplasmic-facing. The residue at position 21 (S21) is a Phosphoserine. The short motif at 31 to 32 (LL) is the Dileucine internalization motif element. The chain crosses the membrane as a helical span at residues 52–72 (GAYIIFFCLGIGGLLPWNFFV). Residues 73 to 105 (TAKEYWAFKLRNCSSPASGKDPEDADILNYFES) are Extracellular-facing. The N-linked (GlcNAc...) asparagine glycan is linked to N84. Residues 106 to 126 (YLAVASTVPSLLFLVANFLLV) traverse the membrane as a helical segment. Residues 127–132 (NRIRVH) lie on the Cytoplasmic side of the membrane. A helical transmembrane segment spans residues 133–153 (VRVLASLSVSLAIFVVMAVLV). Topologically, residues 154–162 (RVDTSSWTR) are extracellular. A helical transmembrane segment spans residues 163 to 183 (GFFSIAMACMAIISSSSTIFN). The Cytoplasmic portion of the chain corresponds to 184 to 199 (SSVYGLTGSFPMRNAQ). Residues 200–220 (ALISGGAMGGTVSAVASLVDL) traverse the membrane as a helical segment. The Extracellular segment spans residues 221–230 (AASSDVRDSA). Residues 231–251 (LAFFLTAAVFLGLCVGLYLLL) traverse the membrane as a helical segment. Residues 252-305 (PQLEYARYYMRPVVPIHVFSSEDSPPRDAPSTSSVAPASRAVHTPPLGPILKKT) are Cytoplasmic-facing. The segment at 272 to 291 (SEDSPPRDAPSTSSVAPASR) is disordered. The chain crosses the membrane as a helical span at residues 306–326 (AGLGFCAVFLYFITALIFPAI). Over 327–340 (STNIQPMHKGTGSP) the chain is Extracellular. The helical transmembrane segment at 341–361 (WTSKFYVPLTVFLLFNFADLC) threads the bilayer. The Cytoplasmic segment spans residues 362-377 (GRQVTAWIQVPGPRSK). A helical transmembrane segment spans residues 378–398 (LLPILAVSRVCLVPLFLLCNY). Topologically, residues 399–414 (QPRSHLTLVLFQSDIY) are extracellular. A helical membrane pass occupies residues 415–437 (PILFTCLLGLSNGYLSTLVLMYG). Topologically, residues 438-450 (PKIVPRELAEATS) are cytoplasmic. A helical transmembrane segment spans residues 451–471 (VVMLFYMSLGLMLGSACAALL). The Extracellular segment spans residues 472-475 (EHFI).

Belongs to the SLC29A/ENT transporter (TC 2.A.57) family. In terms of tissue distribution, widely expressed. Highest levels in heart and liver (at protein level).

It is found in the lysosome membrane. Its subcellular location is the late endosome membrane. The protein resides in the mitochondrion membrane. The protein localises to the cell membrane. The catalysed reaction is adenosine(in) = adenosine(out). It catalyses the reaction guanosine(in) = guanosine(out). The enzyme catalyses inosine(in) = inosine(out). It carries out the reaction uridine(out) = uridine(in). The catalysed reaction is cytidine(in) = cytidine(out). It catalyses the reaction thymidine(in) = thymidine(out). The enzyme catalyses 2'-deoxyadenosine(in) = 2'-deoxyadenosine(out). It carries out the reaction 2'-deoxycytidine(in) = 2'-deoxycytidine(out). The catalysed reaction is guanine(out) = guanine(in). It catalyses the reaction uracil(in) = uracil(out). The enzyme catalyses (R)-noradrenaline(out) = (R)-noradrenaline(in). It carries out the reaction dopamine(out) = dopamine(in). The catalysed reaction is serotonin(out) = serotonin(in). It catalyses the reaction tyramine(in) = tyramine(out). The enzyme catalyses ATP(in) = ATP(out). Its function is as follows. Uniporter that mediates the facilitative transport of nucleoside across lysosomal and mitochondrial membranes. Functions as a non-electrogenic Na(+)-independent transporter. Substrate transport is pH-dependent and enhanced under acidic condition, probably reflecting the location of the transporter in acidic intracellular compartments. Proton is not a cotransporting ion but most likely change the ionization state of the transporter which dictates transport-permissible/impermissible conformation for nucleoside translocation. May direct the nucleoside transport from lysosomes to cytosol or cytosol to mitochondria to facilitate the fundamental function of salvage synthesis of nucleic acids. Involved in the transport of nucleosides (adenosine, guanosine, uridine, thymidine, cytidine and inosine) and deoxynucleosides (deoxyadenosine, deoxycytidine). Also mediates transport of purine nucleobases (adenine, guanine) and pyrimidine nucleobases (uracil). Also able to transport monoamine neurotransmitters dopamine, serotonin, noradrenaline and tyramine. Capable of transporting ATP. Mediates nucleoside export from lysosomes in macrophages, which regulates macrophage functions and numbers. In Rattus norvegicus (Rat), this protein is Equilibrative nucleoside transporter 3.